A 359-amino-acid chain; its full sequence is 3-dehydroquinate synthase (359 aa).

NAD(+) is bound by residues 71–76, 105–109, 129–130, Lys-142, Lys-151, and 169–172; these read DGEAHK, GVIGD, TT, and TLHT. 3 residues coordinate Zn(2+): Glu-184, His-247, and His-264.

It belongs to the sugar phosphate cyclases superfamily. Dehydroquinate synthase family. Requires Co(2+) as cofactor. Zn(2+) is required as a cofactor. The cofactor is NAD(+).

The protein localises to the cytoplasm. The enzyme catalyses 7-phospho-2-dehydro-3-deoxy-D-arabino-heptonate = 3-dehydroquinate + phosphate. It functions in the pathway metabolic intermediate biosynthesis; chorismate biosynthesis; chorismate from D-erythrose 4-phosphate and phosphoenolpyruvate: step 2/7. In terms of biological role, catalyzes the conversion of 3-deoxy-D-arabino-heptulosonate 7-phosphate (DAHP) to dehydroquinate (DHQ). The sequence is that of 3-dehydroquinate synthase from Neisseria meningitidis serogroup C (strain 053442).